A 249-amino-acid polypeptide reads, in one-letter code: MKHSVSSMNTSLSGKVAAITGAASGIGLECARTLLGAGAKVVLIDREGEKLNKLVAELGENAFALQVDLMQADQVDNLLQGILQLTGRLDIFHANAGAYIGGPVAEGDPDVWDRVLHLNINAAFRCVRSVLPHLIAQKSGDIIFTAVIAGVVPVIWEPVYTASKFAVQAFVHTTRRQVAQYGVRVGAVLPGPVVTALLDDWPKAKMDEALANGSLMQPIEVAESVLFMVTRSKNVTVRDIVILPNSVDL.

T20 to L43 is an NAD(+) binding site. The Proton acceptor role is filled by Y160.

Belongs to the short-chain dehydrogenases/reductases (SDR) family. Homotetramer.

The catalysed reaction is ribitol + NAD(+) = D-ribulose + NADH + H(+). This is Ribitol 2-dehydrogenase (rbtD) from Klebsiella aerogenes (Enterobacter aerogenes).